The following is a 174-amino-acid chain: ATP-dependent protease subunit HslV (174 aa).

Thr2 is a catalytic residue. Residues Gly157, Cys160, and Thr163 each coordinate Na(+).

This sequence belongs to the peptidase T1B family. HslV subfamily. A double ring-shaped homohexamer of HslV is capped on each side by a ring-shaped HslU homohexamer. The assembly of the HslU/HslV complex is dependent on binding of ATP.

It is found in the cytoplasm. The catalysed reaction is ATP-dependent cleavage of peptide bonds with broad specificity.. With respect to regulation, allosterically activated by HslU binding. Protease subunit of a proteasome-like degradation complex believed to be a general protein degrading machinery. The sequence is that of ATP-dependent protease subunit HslV from Shewanella denitrificans (strain OS217 / ATCC BAA-1090 / DSM 15013).